The sequence spans 298 residues: NADH-cytochrome b5 reductase 2 (298 aa).

A helical membrane pass occupies residues 15–38 (FVLPVAAAAVGLASYSFTSSSFIA). The 105-residue stretch at 49 to 153 (DEWIDLKLIS…KGPFVKWKWE (105 aa)) folds into the FAD-binding FR-type domain. FAD is bound at residue 156-191 (QFKSIALIGGGTGITPLYQLIHEITKNPADKTQVSL).

The protein belongs to the flavoprotein pyridine nucleotide cytochrome reductase family. FAD is required as a cofactor.

It localises to the mitochondrion outer membrane. It carries out the reaction 2 Fe(III)-[cytochrome b5] + NADH = 2 Fe(II)-[cytochrome b5] + NAD(+) + H(+). May mediate the reduction of outer membrane cytochrome b5. This is NADH-cytochrome b5 reductase 2 (MCR1) from Scheffersomyces stipitis (strain ATCC 58785 / CBS 6054 / NBRC 10063 / NRRL Y-11545) (Yeast).